The following is a 153-amino-acid chain: Large ribosomal subunit protein uL22 (153 aa).

This sequence belongs to the universal ribosomal protein uL22 family. In terms of assembly, part of the 50S ribosomal subunit.

Its function is as follows. This protein binds specifically to 23S rRNA. It makes multiple contacts with different domains of the 23S rRNA in the assembled 50S subunit and ribosome. The globular domain of the protein is located near the polypeptide exit tunnel on the outside of the subunit, while an extended beta-hairpin is found that lines the wall of the exit tunnel in the center of the 70S ribosome. The polypeptide is Large ribosomal subunit protein uL22 (Methanocella arvoryzae (strain DSM 22066 / NBRC 105507 / MRE50)).